Reading from the N-terminus, the 36-residue chain is EAPVTFTVEKGSDEKNLALSIKYNKEGDSMAEVELK.

Belongs to the expansin family. Expansin B subfamily.

The protein localises to the secreted. This chain is Pollen allergen Dac g 2, found in Dactylis glomerata (Orchard grass).